A 546-amino-acid chain; its full sequence is T-complex protein 1 subunit zeta (546 aa).

Ser-2 carries the N-acetylserine modification. The residue at position 249 (Ser-249) is a Phosphoserine.

This sequence belongs to the TCP-1 chaperonin family. As to quaternary structure, heterooligomeric complex of about 850 to 900 kDa that forms two stacked rings, 12 to 16 nm in diameter.

The protein resides in the cytoplasm. Molecular chaperone; assists the folding of proteins upon ATP hydrolysis. Known to play a role, in vitro, in the folding of actin and tubulin. In yeast may play a role in mitotic spindle formation. The protein is T-complex protein 1 subunit zeta (CCT6) of Saccharomyces cerevisiae (strain ATCC 204508 / S288c) (Baker's yeast).